Reading from the N-terminus, the 110-residue chain is U9-agatoxin-Ao1a (110 aa).

Positions 1 to 17 are cleaved as a signal peptide; that stretch reads MKLLLAIAGLFLVQTLA. Residues 18 to 38 constitute a propeptide that is removed on maturation; sequence EDVRAHEESSFLAAVAPEEQR. 5 cysteine pairs are disulfide-bonded: cysteine 40/cysteine 54, cysteine 47/cysteine 60, cysteine 51/cysteine 87, cysteine 53/cysteine 72, and cysteine 62/cysteine 70.

This sequence belongs to the neurotoxin 37 family. As to expression, expressed by the venom gland.

It localises to the secreted. This chain is U9-agatoxin-Ao1a, found in Agelena orientalis (Funnel-web spider).